Consider the following 325-residue polypeptide: Delta(1)-pyrroline-2-carboxylate reductase (325 aa).

This sequence belongs to the ornithine cyclodeaminase/mu-crystallin family.

The enzyme catalyses L-proline + NAD(+) = 1-pyrroline-2-carboxylate + NADH + H(+). The catalysed reaction is L-proline + NADP(+) = 1-pyrroline-2-carboxylate + NADPH + H(+). Catalyzes the reduction of Delta(1)-pyrroline-2-carboxylate (Pyr2C) to L-proline, using preferentially NADPH over NADH as the electron donor. Is likely involved in a degradation pathway that converts trans-3-hydroxy-L-proline (t3LHyp) to L-proline. The protein is Delta(1)-pyrroline-2-carboxylate reductase of Bacillus thuringiensis subsp. konkukian (strain 97-27).